Here is a 360-residue protein sequence, read N- to C-terminus: Photosystem II protein D1 2 (360 aa).

Transmembrane regions (helical) follow at residues 29 to 46 (YIGW…AATT), 118 to 133 (HFLT…EWEL), and 142 to 156 (WICL…AATA). Residue histidine 118 participates in chlorophyll a binding. Tyrosine 126 lines the pheophytin a pocket. [CaMn4O5] cluster is bound by residues aspartate 170 and glutamate 189. The helical transmembrane segment at 197-218 (FHMLGVAGVFGGSLFSAMHGSL) threads the bilayer. A chlorophyll a-binding site is contributed by histidine 198. A quinone contacts are provided by residues histidine 215 and 264–265 (SF). A Fe cation-binding site is contributed by histidine 215. Histidine 272 lines the Fe cation pocket. The helical transmembrane segment at 274–288 (FLAAWPVIGIWFTAL) threads the bilayer. Positions 332, 333, 342, and 344 each coordinate [CaMn4O5] cluster. A propeptide spanning residues 345-360 (AGEVAPVALTAPAING) is cleaved from the precursor.

Belongs to the reaction center PufL/M/PsbA/D family. As to quaternary structure, PSII is composed of 1 copy each of membrane proteins PsbA, PsbB, PsbC, PsbD, PsbE, PsbF, PsbH, PsbI, PsbJ, PsbK, PsbL, PsbM, PsbT, PsbX, PsbY, PsbZ, Psb30/Ycf12, peripheral proteins PsbO, CyanoQ (PsbQ), PsbU, PsbV and a large number of cofactors. It forms dimeric complexes. The D1/D2 heterodimer binds P680, chlorophylls that are the primary electron donor of PSII, and subsequent electron acceptors. It shares a non-heme iron and each subunit binds pheophytin, quinone, additional chlorophylls, carotenoids and lipids. D1 provides most of the ligands for the Mn4-Ca-O5 cluster of the oxygen-evolving complex (OEC). There is also a Cl(-1) ion associated with D1 and D2, which is required for oxygen evolution. The PSII complex binds additional chlorophylls, carotenoids and specific lipids. serves as cofactor. Post-translationally, tyr-161 forms a radical intermediate that is referred to as redox-active TyrZ, YZ or Y-Z. C-terminally processed by CtpA; processing is essential to allow assembly of the oxygen-evolving complex and thus photosynthetic growth.

The protein resides in the cellular thylakoid membrane. It carries out the reaction 2 a plastoquinone + 4 hnu + 2 H2O = 2 a plastoquinol + O2. Its function is as follows. Photosystem II (PSII) is a light-driven water:plastoquinone oxidoreductase that uses light energy to abstract electrons from H(2)O, generating O(2) and a proton gradient subsequently used for ATP formation. It consists of a core antenna complex that captures photons, and an electron transfer chain that converts photonic excitation into a charge separation. The D1/D2 (PsbA/PsbD) reaction center heterodimer binds P680, the primary electron donor of PSII as well as several subsequent electron acceptors. In Trichormus variabilis (strain ATCC 29413 / PCC 7937) (Anabaena variabilis), this protein is Photosystem II protein D1 2.